Reading from the N-terminus, the 155-residue chain is 2-C-methyl-D-erythritol 2,4-cyclodiphosphate synthase (155 aa).

Residues Asp8 and His10 each coordinate a divalent metal cation. Residues 8–10 (DVH) and 34–35 (HS) each bind 4-CDP-2-C-methyl-D-erythritol 2-phosphate. Residue His42 coordinates a divalent metal cation. Residues 56 to 58 (DIG), 61 to 65 (FPDTD), 100 to 106 (AQAPKMA), 132 to 135 (TTTE), Phe139, and Arg142 contribute to the 4-CDP-2-C-methyl-D-erythritol 2-phosphate site.

Belongs to the IspF family. In terms of assembly, homotrimer. A divalent metal cation serves as cofactor.

It carries out the reaction 4-CDP-2-C-methyl-D-erythritol 2-phosphate = 2-C-methyl-D-erythritol 2,4-cyclic diphosphate + CMP. It participates in isoprenoid biosynthesis; isopentenyl diphosphate biosynthesis via DXP pathway; isopentenyl diphosphate from 1-deoxy-D-xylulose 5-phosphate: step 4/6. In terms of biological role, involved in the biosynthesis of isopentenyl diphosphate (IPP) and dimethylallyl diphosphate (DMAPP), two major building blocks of isoprenoid compounds. Catalyzes the conversion of 4-diphosphocytidyl-2-C-methyl-D-erythritol 2-phosphate (CDP-ME2P) to 2-C-methyl-D-erythritol 2,4-cyclodiphosphate (ME-CPP) with a corresponding release of cytidine 5-monophosphate (CMP). This Saccharophagus degradans (strain 2-40 / ATCC 43961 / DSM 17024) protein is 2-C-methyl-D-erythritol 2,4-cyclodiphosphate synthase.